A 103-amino-acid polypeptide reads, in one-letter code: Nucleoid-associated protein Anae109_3761 (103 aa).

It belongs to the YbaB/EbfC family. As to quaternary structure, homodimer.

It localises to the cytoplasm. Its subcellular location is the nucleoid. Functionally, binds to DNA and alters its conformation. May be involved in regulation of gene expression, nucleoid organization and DNA protection. The polypeptide is Nucleoid-associated protein Anae109_3761 (Anaeromyxobacter sp. (strain Fw109-5)).